We begin with the raw amino-acid sequence, 233 residues long: Octanoyltransferase (233 aa).

The region spanning 34-214 (GQAPSTVLLL…EFSAREATLI (181 aa)) is the BPL/LPL catalytic domain. Residues 72–79 (RGGKLTWH), 144–146 (AIG), and 157–159 (GFS) each bind substrate. Cys-175 (acyl-thioester intermediate) is an active-site residue.

This sequence belongs to the LipB family.

It localises to the cytoplasm. The catalysed reaction is octanoyl-[ACP] + L-lysyl-[protein] = N(6)-octanoyl-L-lysyl-[protein] + holo-[ACP] + H(+). It functions in the pathway protein modification; protein lipoylation via endogenous pathway; protein N(6)-(lipoyl)lysine from octanoyl-[acyl-carrier-protein]: step 1/2. In terms of biological role, catalyzes the transfer of endogenously produced octanoic acid from octanoyl-acyl-carrier-protein onto the lipoyl domains of lipoate-dependent enzymes. Lipoyl-ACP can also act as a substrate although octanoyl-ACP is likely to be the physiological substrate. The polypeptide is Octanoyltransferase (Renibacterium salmoninarum (strain ATCC 33209 / DSM 20767 / JCM 11484 / NBRC 15589 / NCIMB 2235)).